Consider the following 141-residue polypeptide: Subtilase cytotoxin subunit B (141 aa).

The N-terminal stretch at 1–23 (MTIKRFFVCAGIMGCLSLNPAMA) is a signal peptide. Residues 33 to 35 (MFS) and glutamine 59 each bind N-glycoloyl-alpha-neuraminate. Positions 89–94 (YFYTTG) are hydrophobic patch important for binding to SubA. Tyrosine 101 provides a ligand contact to N-glycoloyl-alpha-neuraminate.

In terms of assembly, forms a complex with SubA with the stoichiometry SubA1:SubB5 (called SubAB5). Each SubB subunit makes different contacts with the single SubA subunit. This subunit alone forms pentamers.

It localises to the secreted. Its subcellular location is the host cytoplasm. The protein localises to the host cytosol. The protein resides in the host endoplasmic reticulum lumen. Functionally, receptor-binding subunit of subtilase cytotoxin SubAB5. Required for receptor-binding and thus correct trafficking in the host cell. Has specificity for host glycans terminating in the sialic acid N-glycolyl-alpha-neuraminic acid (Neu5Gc); each subunit in the SubB pentamer binds one Neu5Gc. The protease subunit (SubA) cleaves host BiP/HSPA5, inducing the host endoplasmic reticulum stress response and eventual cell death. Culture supernatant of E.coli expressing both subA and subB are toxic for Vero cells (African green monkey kidney cell line), Chinese hamster ovary cells and Hct-8 cells (human colonic epithelial cell line); the subunits are not toxic individually. Purified SubAB5 is highly toxic, &lt;0.1 pg is able to kill at least 50% of 30'000 Vero cells in a microtiter plate assay after 3 days; no cytotoxicity is seen at 24 hours. Preabsorption with cells expressing a ganglioside GM2 mimic reduced cytotoxicity of SubAB5 by 93% in the Vero cytotoxicity assay. Intraperitoneal injection of 200 ng of purified SubAB5 kills mice; the higher the dose the faster the mice die. Animals injected with purified SubAB5 have microvascular thrombi in the brain and other organs, including the renal tubules and glomeruli. Mice fed E.coli cells expressing cloned SubAB5 experience drastic weight loss and appear ill and lethargic. SubB alone at 2.5 ug/ml causes vacuolation of Vero cells, which requires the V-type ATPase proton pump; treated cells die. Protein synthesis in Vero cells is transiently inhibited by SubAB5; both subunits are required for this effect. Inhibition of protein synthesis is prevented by brefeldin A; cells are arrested in the G1 phase. SubAB5 at 100 ng/ml induced caspase-dependent apoptosis in Vero cells through mitochondrial membrane damage. This Escherichia coli protein is Subtilase cytotoxin subunit B.